Here is a 219-residue protein sequence, read N- to C-terminus: 2-hydroxy-3-keto-5-methylthiopentenyl-1-phosphate phosphatase (219 aa).

It belongs to the HAD-like hydrolase superfamily. MtnX family.

The enzyme catalyses 2-hydroxy-5-methylsulfanyl-3-oxopent-1-enyl phosphate + H2O = 1,2-dihydroxy-5-(methylsulfanyl)pent-1-en-3-one + phosphate. The protein operates within amino-acid biosynthesis; L-methionine biosynthesis via salvage pathway; L-methionine from S-methyl-5-thio-alpha-D-ribose 1-phosphate: step 4/6. Functionally, dephosphorylates 2-hydroxy-3-keto-5-methylthiopentenyl-1-phosphate (HK-MTPenyl-1-P) yielding 1,2-dihydroxy-3-keto-5-methylthiopentene (DHK-MTPene). This chain is 2-hydroxy-3-keto-5-methylthiopentenyl-1-phosphate phosphatase, found in Bacillus cereus (strain G9842).